We begin with the raw amino-acid sequence, 426 residues long: G2/mitotic-specific cyclin-A (426 aa).

Positions 1–11 (MSMVHGSSFQI) are enriched in polar residues. The tract at residues 1–22 (MSMVHGSSFQIAQDGENENQGV) is disordered.

It belongs to the cyclin family. Cyclin AB subfamily.

Essential for the control of the cell cycle at the G2/M (mitosis) transition. Interacts with the CDC2 and CDK2 protein kinases to form MPF. G2/M cyclins accumulate steadily during G2 and are abruptly destroyed at mitosis. This Patella vulgata (Common limpet) protein is G2/mitotic-specific cyclin-A.